A 123-amino-acid polypeptide reads, in one-letter code: Ribosome-binding factor A (123 aa).

The protein belongs to the RbfA family. Monomer. Binds 30S ribosomal subunits, but not 50S ribosomal subunits or 70S ribosomes.

The protein resides in the cytoplasm. In terms of biological role, one of several proteins that assist in the late maturation steps of the functional core of the 30S ribosomal subunit. Associates with free 30S ribosomal subunits (but not with 30S subunits that are part of 70S ribosomes or polysomes). Required for efficient processing of 16S rRNA. May interact with the 5'-terminal helix region of 16S rRNA. The polypeptide is Ribosome-binding factor A (Lactobacillus gasseri (strain ATCC 33323 / DSM 20243 / BCRC 14619 / CIP 102991 / JCM 1131 / KCTC 3163 / NCIMB 11718 / NCTC 13722 / AM63)).